Reading from the N-terminus, the 174-residue chain is Type II restriction enzyme Bsp6I (174 aa).

The enzyme catalyses Endonucleolytic cleavage of DNA to give specific double-stranded fragments with terminal 5'-phosphates.. Functionally, a P subtype restriction enzyme that recognizes the double-stranded sequence 5'-GCNGC-3' and cleaves after C-2. This chain is Type II restriction enzyme Bsp6I, found in Bacillus sp. (strain RFL6).